Reading from the N-terminus, the 217-residue chain is Small ribosomal subunit protein uS3 (217 aa).

Positions 38–106 constitute a KH type-2 domain; the sequence is IRKFVQKELA…QVHINIIEIK (69 aa).

This sequence belongs to the universal ribosomal protein uS3 family. In terms of assembly, part of the 30S ribosomal subunit. Forms a tight complex with proteins S10 and S14.

In terms of biological role, binds the lower part of the 30S subunit head. Binds mRNA in the 70S ribosome, positioning it for translation. The sequence is that of Small ribosomal subunit protein uS3 from Streptococcus gordonii (strain Challis / ATCC 35105 / BCRC 15272 / CH1 / DL1 / V288).